We begin with the raw amino-acid sequence, 286 residues long: Nucleotide-binding protein HAPS_0087 (286 aa).

8-15 (GRSGSGKS) is a binding site for ATP. A GTP-binding site is contributed by 56-59 (DVRN).

This sequence belongs to the RapZ-like family.

In terms of biological role, displays ATPase and GTPase activities. This is Nucleotide-binding protein HAPS_0087 from Glaesserella parasuis serovar 5 (strain SH0165) (Haemophilus parasuis).